The following is a 115-amino-acid chain: UPF0102 protein NMB2089 (115 aa).

The protein belongs to the UPF0102 family.

The sequence is that of UPF0102 protein NMB2089 from Neisseria meningitidis serogroup B (strain ATCC BAA-335 / MC58).